Here is a 375-residue protein sequence, read N- to C-terminus: Alcohol dehydrogenase 1A (375 aa).

An N-acetylserine modification is found at serine 2. Residue serine 23 is modified to Phosphoserine. Cysteine 47 contributes to the Zn(2+) binding site. 48 to 52 (GTDDH) contributes to the NAD(+) binding site. The Zn(2+) site is built by histidine 68, cysteine 98, cysteine 101, cysteine 104, cysteine 112, and cysteine 175. NAD(+)-binding positions include 200–205 (GLGGVG), aspartate 224, lysine 229, isoleucine 270, 293–295 (VGV), 318–320 (AVL), and arginine 370.

Belongs to the zinc-containing alcohol dehydrogenase family. As to quaternary structure, dimer of identical or heterodimer of closely related subunits alpha, beta, or gamma that are encoded by genes ADH1A, ADH1B, and ADH1C, respectively. Zn(2+) serves as cofactor.

It is found in the cytoplasm. The catalysed reaction is a primary alcohol + NAD(+) = an aldehyde + NADH + H(+). It carries out the reaction a secondary alcohol + NAD(+) = a ketone + NADH + H(+). It catalyses the reaction butan-1-ol + NAD(+) = butanal + NADH + H(+). The enzyme catalyses 1-propanol + NAD(+) = propanal + NADH + H(+). In terms of biological role, alcohol dehydrogenase. Oxidizes primary as well as secondary alcohols. Ethanol is a very poor substrate. The protein is Alcohol dehydrogenase 1A (ADH1A) of Pongo abelii (Sumatran orangutan).